We begin with the raw amino-acid sequence, 272 residues long: Putative B3 domain-containing protein Os02g0455900 (272 aa).

Residues 30-134 (GKVLMPSDVS…RFFICCRCTC (105 aa)) constitute a DNA-binding region (TF-B3). A disordered region spans residues 189 to 227 (TASLGCAAAQPPQVPPTPTPRRRRRSMMVHPEPPEHTTD).

It localises to the nucleus. This Oryza sativa subsp. japonica (Rice) protein is Putative B3 domain-containing protein Os02g0455900.